Here is a 345-residue protein sequence, read N- to C-terminus: GTPase Obg (345 aa).

The Obg domain maps to 1–158 (MFIDSVKITL…RLVRLELKLI (158 aa)). Positions 159–339 (ADVGLVGFPN…LKFMLLEEIK (181 aa)) constitute an OBG-type G domain. Residues 165 to 172 (GFPNVGKS), 190 to 194 (FTTLT), 212 to 215 (DIPG), 280 to 283 (SKSD), and 320 to 322 (SSL) each bind GTP. S172 and T192 together coordinate Mg(2+).

Belongs to the TRAFAC class OBG-HflX-like GTPase superfamily. OBG GTPase family. Monomer. The cofactor is Mg(2+).

The protein localises to the cytoplasm. In terms of biological role, an essential GTPase which binds GTP, GDP and possibly (p)ppGpp with moderate affinity, with high nucleotide exchange rates and a fairly low GTP hydrolysis rate. Plays a role in control of the cell cycle, stress response, ribosome biogenesis and in those bacteria that undergo differentiation, in morphogenesis control. The chain is GTPase Obg from Campylobacter jejuni subsp. doylei (strain ATCC BAA-1458 / RM4099 / 269.97).